The primary structure comprises 449 residues: Histone PARylation factor 1-like (449 aa).

Residues 3–28 (KEDCKYWDKCYQQNPAHLSKYNHPKK) form a CCHC-type zinc finger. The segment at 18 to 93 (AHLSKYNHPK…AKGSYEAETE (76 aa)) is disordered. Composition is skewed to basic and acidic residues over residues 28-41 (KQQE…EGKK) and 54-69 (EQKK…KDKS). At S72 the chain carries Phosphoserine. E384 acts as the Proton donor in catalysis.

This sequence belongs to the HPF1 family.

Its subcellular location is the chromosome. It is found in the nucleus. Cofactor for serine ADP-ribosylation that confers serine specificity on Parp. Switches the amino acid specificity of Parp from aspartate or glutamate to serine residues. Acts by completing the active site of Parp: forms a composite active site composed of residues from HPF1/CG1218 and Parp. The protein is Histone PARylation factor 1-like of Drosophila melanogaster (Fruit fly).